Consider the following 110-residue polypeptide: U-scoloptoxin(16)-Er7a (110 aa).

The N-terminal stretch at 1 to 26 (MTSTRKLSVSCLIVFMVSSLIAVSSG) is a signal peptide.

It belongs to the scoloptoxin-16 family. Post-translationally, contains 4 disulfide bonds. Expressed by the venom gland.

The protein localises to the secreted. This Ethmostigmus rubripes (Giant centipede) protein is U-scoloptoxin(16)-Er7a.